The chain runs to 728 residues: Probable 3',5'-cyclic phosphodiesterase pde-5 (728 aa).

In terms of domain architecture, GAF spans 214 to 371 (SMDAVIIKVM…HHAKLYDKIR (158 aa)). A PDEase domain is found at 390-709 (CNADEVNKLK…KKWEELAEEQ (320 aa)). H465 (proton donor) is an active-site residue. A divalent metal cation is bound by residues H469, H503, D504, and D614. Residues 691-728 (MRERCEYNAKKWEELAEEQRKKQEALAQQNGEANETQE) are a coiled coil. Residues 708-728 (EQRKKQEALAQQNGEANETQE) are disordered. Residues 716–728 (LAQQNGEANETQE) are compositionally biased toward polar residues.

This sequence belongs to the cyclic nucleotide phosphodiesterase family. A divalent metal cation is required as a cofactor.

The catalysed reaction is a nucleoside 3',5'-cyclic phosphate + H2O = a nucleoside 5'-phosphate + H(+). Its function is as follows. Redundantly with pde-1, plays a role in the AFD thermosensory neurons to regulate microvilli receptive ending morphology, possibly by regulating cGMP levels. The sequence is that of Probable 3',5'-cyclic phosphodiesterase pde-5 (pde-5) from Caenorhabditis elegans.